Reading from the N-terminus, the 242-residue chain is Lysosomal membrane ascorbate-dependent ferrireductase CYB561A3 (242 aa).

Topologically, residues 1-4 are cytoplasmic; that stretch reads MASG. A helical membrane pass occupies residues 5–25; it reads WFYLSCMVLGSLGSMCILFTA. The Cytochrome b561 domain maps to 12–219; that stretch reads VLGSLGSMCI…FGLLVLYVLL (208 aa). At 26 to 40 the chain is on the lumenal side; sequence YWMQYWRGGFAWDGT. Residues 41–61 form a helical membrane-spanning segment; it reads VLMFNWHPVLMVAGMVVLYGA. Heme b-binding residues include His-47 and Arg-67. Topologically, residues 62-81 are cytoplasmic; the sequence is ASLVYRLPSSWVGPRLPWKV. Residues Arg-76 and Lys-80 each contribute to the L-ascorbate site. A helical membrane pass occupies residues 82–102; the sequence is LHAALHLLAFTCTVVGLIAVF. Residues His-83, 112-115, and His-117 contribute to the heme b site; that span reads HLYS. The Lumenal segment spans residues 103–119; that stretch reads RFHNHSRIAHLYSLHSW. Residues 120–140 form a helical membrane-spanning segment; the sequence is LGITTVVLFACQWFLGFAVFL. Residues 141–154 lie on the Cytoplasmic side of the membrane; sequence LPWASQWLRSLLKP. Residue Arg-149 coordinates L-ascorbate. Residues 155–175 traverse the membrane as a helical segment; it reads LHVFFGACILSLSITSVISGI. Heme b is bound by residues His-156 and Glu-177. Topologically, residues 176–202 are lumenal; the sequence is NEKLFFVLKNATKPYSSLPGEAVFANS. The helical transmembrane segment at 203-223 threads the bilayer; that stretch reads TGLLVVAFGLLVLYVLLASSW. Lys-224 is a heme b binding site. The Cytoplasmic segment spans residues 224–242; sequence KRPDPGALTDRQPLLHDRE.

As to quaternary structure, homodimer. The cofactor is heme b. Post-translationally, N-glycosylated. In terms of tissue distribution, present in lung, spleen, thymus and testis. Present at low level in brain, heart, liver and kidney. Expressed in the alveolar macrophages of the lung, in the white pulp of the spleen, widespread in the thymus, and in the Sertoli cells of the testis (at protein level).

The protein localises to the late endosome membrane. The protein resides in the lysosome membrane. It carries out the reaction Fe(3+)(out) + L-ascorbate(in) = monodehydro-L-ascorbate radical(in) + Fe(2+)(out) + H(+). In terms of biological role, transmembrane reductase that uses ascorbate as an electron donor in the cytoplasm and transfers electrons across membranes to reduce iron cations Fe(3+) into Fe(2+) in the lumen of the late endosome and lysosome. Reduced iron can then be extruded from the late endosome and lysosome to the cytoplasm by divalent metal-specific transporters. It is therefore most probably involved in endosomal and lysosomal cellular iron homeostasis. The polypeptide is Lysosomal membrane ascorbate-dependent ferrireductase CYB561A3 (Mus musculus (Mouse)).